A 160-amino-acid polypeptide reads, in one-letter code: AP-1 complex subunit sigma-2 (160 aa).

Belongs to the adaptor complexes small subunit family. Adaptor protein complex 1 (AP-1) is a heterotetramer composed of two large adaptins (gamma-type subunit AP1G1 and beta-type subunit AP1B1), a medium adaptin (mu-type subunit AP1M1 or AP1M2) and a small adaptin (sigma-type subunit AP1S1 or AP1S2 or AP1S3). Binds to MUC1. In terms of tissue distribution, widely expressed.

The protein resides in the golgi apparatus. The protein localises to the cytoplasmic vesicle membrane. It is found in the membrane. It localises to the clathrin-coated pit. Functionally, subunit of clathrin-associated adaptor protein complex 1 that plays a role in protein sorting in the late-Golgi/trans-Golgi network (TGN) and/or endosomes. The AP complexes mediate both the recruitment of clathrin to membranes and the recognition of sorting signals within the cytosolic tails of transmembrane cargo molecules. The protein is AP-1 complex subunit sigma-2 (Ap1s2) of Mus musculus (Mouse).